A 289-amino-acid chain; its full sequence is tRNA(Ile)-lysidine synthase (289 aa).

11–16 (SGGPDS) is an ATP binding site.

This sequence belongs to the tRNA(Ile)-lysidine synthase family.

The protein resides in the cytoplasm. The enzyme catalyses cytidine(34) in tRNA(Ile2) + L-lysine + ATP = lysidine(34) in tRNA(Ile2) + AMP + diphosphate + H(+). In terms of biological role, ligates lysine onto the cytidine present at position 34 of the AUA codon-specific tRNA(Ile) that contains the anticodon CAU, in an ATP-dependent manner. Cytidine is converted to lysidine, thus changing the amino acid specificity of the tRNA from methionine to isoleucine. In Mycoplasma pneumoniae (strain ATCC 29342 / M129 / Subtype 1) (Mycoplasmoides pneumoniae), this protein is tRNA(Ile)-lysidine synthase.